Here is a 437-residue protein sequence, read N- to C-terminus: Doublesex- and mab-3-related transcription factor A2 (437 aa).

Positions 49 to 96 form a DNA-binding region, DM; the sequence is CARCRNHGVVSALKGHKRYCRWKDCMCAKCTLIAERQRVMAAQVALRR. Disordered stretches follow at residues 163–254 and 297–317; these read SVTP…ARQR and DKSE…PSVS. Low complexity-rich tracts occupy residues 179 to 201 and 223 to 235; these read SESV…SGSE and SPSS…SESG. The DMA domain occupies 254-289; sequence RTPIDILTRVFPAQKRSVLELVLQGCGGDVVQAIEQ.

This sequence belongs to the DMRT family.

The protein localises to the nucleus. Functionally, may be involved in sexual development. The protein is Doublesex- and mab-3-related transcription factor A2 (dmrta2) of Xenopus tropicalis (Western clawed frog).